The primary structure comprises 205 residues: Holliday junction branch migration complex subunit RuvA (205 aa).

Residues 1–64 (MIGKLKGVID…EDQIKLFGFR (64 aa)) are domain I. The interval 65 to 143 (SDIEREWFRL…AFANVDPAVV (79 aa)) is domain II. The flexible linker stretch occupies residues 144–154 (HLAGAVDDDRA). Positions 154-205 (APRPVKDAISALVNLGYGQPQAAAAIASVARDAGEGAETAQLIRLGLKELAK) are domain III.

The protein belongs to the RuvA family. In terms of assembly, homotetramer. Forms an RuvA(8)-RuvB(12)-Holliday junction (HJ) complex. HJ DNA is sandwiched between 2 RuvA tetramers; dsDNA enters through RuvA and exits via RuvB. An RuvB hexamer assembles on each DNA strand where it exits the tetramer. Each RuvB hexamer is contacted by two RuvA subunits (via domain III) on 2 adjacent RuvB subunits; this complex drives branch migration. In the full resolvosome a probable DNA-RuvA(4)-RuvB(12)-RuvC(2) complex forms which resolves the HJ.

It localises to the cytoplasm. The RuvA-RuvB-RuvC complex processes Holliday junction (HJ) DNA during genetic recombination and DNA repair, while the RuvA-RuvB complex plays an important role in the rescue of blocked DNA replication forks via replication fork reversal (RFR). RuvA specifically binds to HJ cruciform DNA, conferring on it an open structure. The RuvB hexamer acts as an ATP-dependent pump, pulling dsDNA into and through the RuvAB complex. HJ branch migration allows RuvC to scan DNA until it finds its consensus sequence, where it cleaves and resolves the cruciform DNA. The chain is Holliday junction branch migration complex subunit RuvA from Afipia carboxidovorans (strain ATCC 49405 / DSM 1227 / KCTC 32145 / OM5) (Oligotropha carboxidovorans).